We begin with the raw amino-acid sequence, 97 residues long: Small ribosomal subunit protein eS25 (97 aa).

Residues 1-24 (MAPAASGAKKQKKKWSKGKVKDKA) form a disordered region. Over residues 9-18 (KKQKKKWSKG) the composition is skewed to basic residues.

Belongs to the eukaryotic ribosomal protein eS25 family. Component of the small ribosomal subunit (SSU). Mature N.crassa ribosomes consist of a small (40S) and a large (60S) subunit. The 40S small subunit contains 1 molecule of ribosomal RNA (18S rRNA) and at least 32 different proteins. The large 60S subunit contains 3 rRNA molecules (26S, 5.8S and 5S rRNA) and at least 42 different proteins.

It localises to the cytoplasm. Functionally, component of the ribosome, a large ribonucleoprotein complex responsible for the synthesis of proteins in the cell. The small ribosomal subunit (SSU) binds messenger RNAs (mRNAs) and translates the encoded message by selecting cognate aminoacyl-transfer RNA (tRNA) molecules. The large subunit (LSU) contains the ribosomal catalytic site termed the peptidyl transferase center (PTC), which catalyzes the formation of peptide bonds, thereby polymerizing the amino acids delivered by tRNAs into a polypeptide chain. The nascent polypeptides leave the ribosome through a tunnel in the LSU and interact with protein factors that function in enzymatic processing, targeting, and the membrane insertion of nascent chains at the exit of the ribosomal tunnel. The protein is Small ribosomal subunit protein eS25 (rps-25) of Neurospora crassa (strain ATCC 24698 / 74-OR23-1A / CBS 708.71 / DSM 1257 / FGSC 987).